The sequence spans 288 residues: UTP--glucose-1-phosphate uridylyltransferase (288 aa).

This sequence belongs to the UDPGP type 2 family.

It catalyses the reaction alpha-D-glucose 1-phosphate + UTP + H(+) = UDP-alpha-D-glucose + diphosphate. The protein operates within glycolipid metabolism; diglucosyl-diacylglycerol biosynthesis. Catalyzes the formation of UDP-glucose from glucose-1-phosphate and UTP. This is an intermediate step in the biosynthesis of diglucosyl-diacylglycerol (Glc2-DAG), i.e. the predominant glycolipid found in the S.aureus membrane, which is also used as a membrane anchor for lipoteichoic acid (LTA). The protein is UTP--glucose-1-phosphate uridylyltransferase (gtaB) of Staphylococcus aureus (strain bovine RF122 / ET3-1).